The chain runs to 142 residues: Ribosome-binding factor A (142 aa).

Residues 118 to 130 (DKAKQKQAGREDD) are compositionally biased toward basic and acidic residues. Residues 118-142 (DKAKQKQAGREDDTPSVDEQEKDTD) are disordered. Residues 131 to 142 (TPSVDEQEKDTD) are compositionally biased toward acidic residues.

Belongs to the RbfA family. As to quaternary structure, monomer. Binds 30S ribosomal subunits, but not 50S ribosomal subunits or 70S ribosomes.

The protein localises to the cytoplasm. One of several proteins that assist in the late maturation steps of the functional core of the 30S ribosomal subunit. Associates with free 30S ribosomal subunits (but not with 30S subunits that are part of 70S ribosomes or polysomes). Required for efficient processing of 16S rRNA. May interact with the 5'-terminal helix region of 16S rRNA. The chain is Ribosome-binding factor A from Shewanella denitrificans (strain OS217 / ATCC BAA-1090 / DSM 15013).